The following is a 124-amino-acid chain: uncharacterized protein (124 aa).

This is an uncharacterized protein from Saccharomyces cerevisiae (strain ATCC 204508 / S288c) (Baker's yeast).